A 109-amino-acid polypeptide reads, in one-letter code: Serine protease inhibitor (109 aa).

The N-terminal stretch at 1 to 28 is a signal peptide; sequence MKMKLLQVHFVLLVSSSFLLGYTGMVTA. 5 cysteine pairs are disulfide-bonded: cysteine 43–cysteine 83, cysteine 52–cysteine 79, cysteine 58–cysteine 73, cysteine 62–cysteine 104, and cysteine 85–cysteine 98. Residues 43–104 enclose the TIL domain; it reads CRENEIFSQC…QGVCILENSC (62 aa).

Belongs to the serine protease inhibitor-like (TIL domain-containing) family. Ubiquitously expressed (at protein level), including in venom glands. Found more precisely in the epidermis, fat body, gut, muscle, and venom of worker bees.

The protein resides in the secreted. In terms of biological role, dual role peptide that functions as a broad-spectrum antimicrobial peptide and antifibrinolytic toxin. Inhibits trypsin (IC(50)=375 nM), plasmin (IC(50)=2140 nM), and microbial serine proteases (subtilisin A (IC(50)=294 nM) and proteinase K (IC(50)=459 nM)). Exhibits antifibrinolytic activity by binding and inhibiting plasmin. Does not inhibit chymotrypsin, elastase or thrombin. Binds to microbial cell wall carbohydrates (LPS, mannan and N-acetyl-D-glucosamine) and shows antimicrobial activity (MIC=4.1 uM against B.thuringiensis, MIC=4.95 uM against E.coli, MIC=9.6 uM against the fungus B.bassiana). Does not show hemolytic activity. The polypeptide is Serine protease inhibitor (Bombus ignitus (Bumblebee)).